The chain runs to 698 residues: Macrophomene synthase (698 aa).

Positions 21-340 (MEYMYSVPLD…SCDRYSSYRR (320 aa)) are terpene cyclase. Residue Asp-113 coordinates Mg(2+). The DDXXD 1 motif lies at 113–117 (DNIAE). The NSE/DTE motif lies at 242 to 250 (NDFFSFNYE). A prenyltransferase region spans residues 341 to 696 (EKHQMELPIR…IQLALERLRI (356 aa)). Positions 368-387 (LPNGKQLDAPTESSGKDLSD) are disordered. Isopentenyl diphosphate is bound by residues Lys-417, Arg-420, and His-449. 2 residues coordinate Mg(2+): Asp-456 and Asp-460. The DDXXD 2 motif lies at 456–460 (DDIED). Residue Arg-465 participates in dimethylallyl diphosphate binding. Position 466 (Arg-466) interacts with isopentenyl diphosphate. 6 residues coordinate dimethylallyl diphosphate: Lys-543, Thr-544, Gln-579, Asn-586, Lys-596, and Lys-606.

It in the N-terminal section; belongs to the terpene synthase family. In the C-terminal section; belongs to the FPP/GGPP synthase family. Hexamer. Mg(2+) is required as a cofactor.

The catalysed reaction is 5 isopentenyl diphosphate + dimethylallyl diphosphate = all-trans-hexaprenyl diphosphate + 5 diphosphate. The enzyme catalyses all-trans-hexaprenyl diphosphate = macrophomene + diphosphate. In terms of biological role, bifunctional terpene synthase that converts dimethylallyl diphosphate (DMAPP) and isopentenyl diphosphate (IPP) into macrophomene as a single product. The C-terminal prenyltransferase (PT) domain of MpMS catalyzes formation of hexaprenyl diphosphate (HexPP), whereas the N-terminal terpene cyclase (TC) domain catalyzes the cyclization of HexPP to macrophomene. The sequence is that of Macrophomene synthase from Macrophomina phaseolina (strain MS6) (Charcoal rot fungus).